The chain runs to 188 residues: Putative CC-type chemokine FPV060 (188 aa).

Belongs to the intercrine beta (chemokine CC) family. Highly divergent.

The sequence is that of Putative CC-type chemokine FPV060 from Fowlpox virus (strain NVSL) (FPV).